Here is a 554-residue protein sequence, read N- to C-terminus: MSPCKWLTMFLKGCWGKIANMNHLDSCFPLRYIIGRKKASKLLCTMDSGLKSDSHEVERSNFQLNKPEKSLKRYALLSFYVIILLAIPVWWKTTHYERSSLPFEDMENAPSTVQTHLRFSPTFRILDDKGNNLTKEVQKVLEAEPQIYSYNLKVLEDDPVDYRIVLRESTDLQWFWDENNFIIDTPSKGPSELAILIVNCLWEAFSPQVMEVWSKFTRFSSTVEPSRAETKRTVQFSPQYRVLLSLLVGEGNHEPINWDIENAIQKYFNPLIEQLASLAKLNIETQIQYFVEDAEAYIKDDKFCTKHADLPNLVNNFEKYLSFSPHIREPTIHFVLYVPSPQIQPLWLENEDSNIIPTNSMLLPQWGSITTINFNVTEKKLLHDVDLKDYFRVISRDLLLLLGINDVPVSSLSATLADRLLRQRIAESCIEASDTLQNLAKLVHSMQSMAVPKEIQMYVKDTLLSLDMAYKALSQNNLNEALSYSNNAFSKSQEALFHPSMVTTIYFPDESKYGIYAPLFAPILIPLLISFIKEVKDMLRERKLHRVANVPKPN.

The Cytoplasmic segment spans residues 1-73; that stretch reads MSPCKWLTMF…LNKPEKSLKR (73 aa). Residues 74 to 94 form a helical membrane-spanning segment; it reads YALLSFYVIILLAIPVWWKTT. The Lumenal portion of the chain corresponds to 95–511; it reads HYERSSLPFE…VTTIYFPDES (417 aa). N-linked (GlcNAc...) asparagine glycosylation is found at asparagine 132 and asparagine 375. A helical transmembrane segment spans residues 512–532; the sequence is KYGIYAPLFAPILIPLLISFI. Residues 533–554 are Cytoplasmic-facing; that stretch reads KEVKDMLRERKLHRVANVPKPN.

Belongs to the PIGS family. In terms of assembly, forms a complex with PIG-T homolog, PIG-U homolog and GPI8.

The protein localises to the endoplasmic reticulum membrane. The protein operates within glycolipid biosynthesis; glycosylphosphatidylinositol-anchor biosynthesis. Functionally, component of the GPI transamidase complex. Involved in transfer of GPI to proteins. This is GPI transamidase component PIG-S homolog (gpi17) from Schizosaccharomyces pombe (strain 972 / ATCC 24843) (Fission yeast).